We begin with the raw amino-acid sequence, 186 residues long: Probable nicotinate-nucleotide adenylyltransferase (186 aa).

It belongs to the NadD family.

It catalyses the reaction nicotinate beta-D-ribonucleotide + ATP + H(+) = deamido-NAD(+) + diphosphate. It participates in cofactor biosynthesis; NAD(+) biosynthesis; deamido-NAD(+) from nicotinate D-ribonucleotide: step 1/1. In terms of biological role, catalyzes the reversible adenylation of nicotinate mononucleotide (NaMN) to nicotinic acid adenine dinucleotide (NaAD). The chain is Probable nicotinate-nucleotide adenylyltransferase from Tropheryma whipplei (strain TW08/27) (Whipple's bacillus).